The primary structure comprises 141 residues: MAIERTLSIIKPDAVAKNVIGQIYSRFEGAGLKIVASRMAHLSRADAEKFYAVHAARPFFKDLVDFMISGPVMIQVLEGEGAILKNRDLMGATDPKKAEKGTIRADFADSIDANAVHGSDAAETAAVEIAFFFPEMNVYSR.

The ATP site is built by Lys-11, Phe-59, Arg-87, Thr-93, Arg-104, and Asn-114. Residue His-117 is the Pros-phosphohistidine intermediate of the active site.

It belongs to the NDK family. In terms of assembly, homotetramer. Requires Mg(2+) as cofactor.

It is found in the cytoplasm. It catalyses the reaction a 2'-deoxyribonucleoside 5'-diphosphate + ATP = a 2'-deoxyribonucleoside 5'-triphosphate + ADP. The enzyme catalyses a ribonucleoside 5'-diphosphate + ATP = a ribonucleoside 5'-triphosphate + ADP. Its function is as follows. Major role in the synthesis of nucleoside triphosphates other than ATP. The ATP gamma phosphate is transferred to the NDP beta phosphate via a ping-pong mechanism, using a phosphorylated active-site intermediate. This is Nucleoside diphosphate kinase from Burkholderia cenocepacia (strain HI2424).